We begin with the raw amino-acid sequence, 121 residues long: Transposase InsC for insertion element IS2A (121 aa).

It belongs to the transposase 8 family.

Its function is as follows. Involved in the transposition of the insertion sequence IS2. The sequence is that of Transposase InsC for insertion element IS2A (insC1) from Escherichia coli (strain K12).